The primary structure comprises 726 residues: uncharacterized protein (726 aa).

Positions 10–135 (MRISWVVAFI…LLDFVETHLN (126 aa)) constitute a Thioredoxin domain. Disordered stretches follow at residues 133-153 (HLNPDTDPDIPSDEDVLTDED) and 227-280 (VTSV…NPTG). Over residues 138–153 (TDPDIPSDEDVLTDED) the composition is skewed to acidic residues. Residues 675 to 695 (IRVLYMVLGIVTVGILVWYFS) form a helical membrane-spanning segment. Residue Ser708 is modified to Phosphoserine.

It is found in the membrane. This is an uncharacterized protein from Schizosaccharomyces pombe (strain 972 / ATCC 24843) (Fission yeast).